The chain runs to 258 residues: Imidazole glycerol phosphate synthase subunit HisF (258 aa).

Active-site residues include Asp-11 and Asp-130.

The protein belongs to the HisA/HisF family. As to quaternary structure, heterodimer of HisH and HisF.

Its subcellular location is the cytoplasm. It carries out the reaction 5-[(5-phospho-1-deoxy-D-ribulos-1-ylimino)methylamino]-1-(5-phospho-beta-D-ribosyl)imidazole-4-carboxamide + L-glutamine = D-erythro-1-(imidazol-4-yl)glycerol 3-phosphate + 5-amino-1-(5-phospho-beta-D-ribosyl)imidazole-4-carboxamide + L-glutamate + H(+). It functions in the pathway amino-acid biosynthesis; L-histidine biosynthesis; L-histidine from 5-phospho-alpha-D-ribose 1-diphosphate: step 5/9. In terms of biological role, IGPS catalyzes the conversion of PRFAR and glutamine to IGP, AICAR and glutamate. The HisF subunit catalyzes the cyclization activity that produces IGP and AICAR from PRFAR using the ammonia provided by the HisH subunit. The chain is Imidazole glycerol phosphate synthase subunit HisF from Roseiflexus sp. (strain RS-1).